Here is a 228-residue protein sequence, read N- to C-terminus: ATP synthase F(0) complex subunit a (228 aa).

6 helical membrane-spanning segments follow: residues Tyr-13 to Ile-33, Trp-70 to Leu-90, Leu-100 to Thr-120, Ala-140 to Val-160, Leu-162 to Asn-182, and Leu-190 to Ile-210.

It belongs to the ATPase A chain family. In terms of assembly, component of the ATP synthase complex composed at least of ATP5F1A/subunit alpha, ATP5F1B/subunit beta, ATP5MC1/subunit c (homooctomer), MT-ATP6/subunit a, MT-ATP8/subunit 8, ATP5ME/subunit e, ATP5MF/subunit f, ATP5MG/subunit g, ATP5MK/subunit k, ATP5MJ/subunit j, ATP5F1C/subunit gamma, ATP5F1D/subunit delta, ATP5F1E/subunit epsilon, ATP5PF/subunit F6, ATP5PB/subunit b, ATP5PD/subunit d, ATP5PO/subunit OSCP. ATP synthase complex consists of a soluble F(1) head domain (subunits alpha(3) and beta(3)) - the catalytic core - and a membrane F(0) domain - the membrane proton channel (subunits c, a, 8, e, f, g, k and j). These two domains are linked by a central stalk (subunits gamma, delta, and epsilon) rotating inside the F1 region and a stationary peripheral stalk (subunits F6, b, d, and OSCP). Interacts with DNAJC30; interaction is direct.

The protein resides in the mitochondrion inner membrane. It catalyses the reaction H(+)(in) = H(+)(out). Functionally, subunit a, of the mitochondrial membrane ATP synthase complex (F(1)F(0) ATP synthase or Complex V) that produces ATP from ADP in the presence of a proton gradient across the membrane which is generated by electron transport complexes of the respiratory chain. ATP synthase complex consist of a soluble F(1) head domain - the catalytic core - and a membrane F(1) domain - the membrane proton channel. These two domains are linked by a central stalk rotating inside the F(1) region and a stationary peripheral stalk. During catalysis, ATP synthesis in the catalytic domain of F(1) is coupled via a rotary mechanism of the central stalk subunits to proton translocation. With the subunit c (ATP5MC1), forms the proton-conducting channel in the F(0) domain, that contains two crucial half-channels (inlet and outlet) that facilitate proton movement from the mitochondrial intermembrane space (IMS) into the matrix. Protons are taken up via the inlet half-channel and released through the outlet half-channel, following a Grotthuss mechanism. The protein is ATP synthase F(0) complex subunit a of Myxine glutinosa (Atlantic hagfish).